A 233-amino-acid chain; its full sequence is Protein Thf1 (233 aa).

A coiled-coil region spans residues 183 to 204 (DKFSKDLELYRSNLDKMTQALA). The segment at 212–233 (ADRKKREQRQQQASTPVAPPNE) is disordered.

Belongs to the THF1 family.

In terms of biological role, may be involved in photosynthetic membrane biogenesis. The chain is Protein Thf1 from Nostoc sp. (strain PCC 7120 / SAG 25.82 / UTEX 2576).